The chain runs to 141 residues: MIFVSKVHGNIEYEEKDKITFKKGILGFENLKEYALVDLKECEPFKLLQSLEDDEAGLIVVCPFEFFKEYEIKLSDEDTTRLDVKNQSDVVLLTTVTLDSDPKKITTNLKAPIIINISNNLGEQIILDKSDYKIKHLLIEE.

This sequence belongs to the FliW family. In terms of assembly, interacts with translational regulator CsrA and flagellin(s).

The protein localises to the cytoplasm. Functionally, acts as an anti-CsrA protein, binds CsrA and prevents it from repressing translation of its target genes, one of which is flagellin. Binds to flagellin and participates in the assembly of the flagellum. This chain is Flagellar assembly factor FliW, found in Clostridium botulinum (strain Alaska E43 / Type E3).